Here is a 132-residue protein sequence, read N- to C-terminus: Ribosome-binding factor A (132 aa).

It belongs to the RbfA family. Monomer. Binds 30S ribosomal subunits, but not 50S ribosomal subunits or 70S ribosomes.

The protein resides in the cytoplasm. In terms of biological role, one of several proteins that assist in the late maturation steps of the functional core of the 30S ribosomal subunit. Associates with free 30S ribosomal subunits (but not with 30S subunits that are part of 70S ribosomes or polysomes). Required for efficient processing of 16S rRNA. May interact with the 5'-terminal helix region of 16S rRNA. This is Ribosome-binding factor A from Burkholderia cenocepacia (strain ATCC BAA-245 / DSM 16553 / LMG 16656 / NCTC 13227 / J2315 / CF5610) (Burkholderia cepacia (strain J2315)).